Reading from the N-terminus, the 445-residue chain is Tubulin beta chain (445 aa).

The GTP site is built by Gln-11, Glu-69, Ser-138, Gly-142, Thr-143, Gly-144, Asn-204, and Asn-226. Position 69 (Glu-69) interacts with Mg(2+).

This sequence belongs to the tubulin family. Dimer of alpha and beta chains. A typical microtubule is a hollow water-filled tube with an outer diameter of 25 nm and an inner diameter of 15 nM. Alpha-beta heterodimers associate head-to-tail to form protofilaments running lengthwise along the microtubule wall with the beta-tubulin subunit facing the microtubule plus end conferring a structural polarity. Microtubules usually have 13 protofilaments but different protofilament numbers can be found in some organisms and specialized cells. Requires Mg(2+) as cofactor.

The protein resides in the cytoplasm. The protein localises to the cytoskeleton. Its function is as follows. Tubulin is the major constituent of microtubules, a cylinder consisting of laterally associated linear protofilaments composed of alpha- and beta-tubulin heterodimers. Microtubules grow by the addition of GTP-tubulin dimers to the microtubule end, where a stabilizing cap forms. Below the cap, tubulin dimers are in GDP-bound state, owing to GTPase activity of alpha-tubulin. This is Tubulin beta chain from Coprinopsis cinerea (strain Okayama-7 / 130 / ATCC MYA-4618 / FGSC 9003) (Inky cap fungus).